A 154-amino-acid chain; its full sequence is uncharacterized protein (154 aa).

The disordered stretch occupies residues 91 to 154 (PSEESWGCRQ…WGSPQPSRGA (64 aa)). The segment covering 134 to 154 (SRDTSPLGGQSWGSPQPSRGA) has biased composition (polar residues).

This is an uncharacterized protein from Homo sapiens (Human).